A 1036-amino-acid polypeptide reads, in one-letter code: MTMGDMKTPDFDDLLAAFDIPDMVDPKAAIESGHDDHESHIKQNAHVDDDSHTPSSSDVGVSVIVKNVRNIDSSEGVEKDGHNPTGNGLHNGFLTASSLDSYGKDGAKSLKGDTPASEVTLKDPAFSQFSPISSAEEFEDDEKIEVDDPPDKEEARAGFRSNVLTGSAPQQDFDKLKALGGENSSKTGVSTSGHTDKNKVKREAESNSITLSVYEPFKVRKAEDKLKENSEKMLESRVLDGKPSSEKSDSGIAAAASSKTKPSSKLSSCIAAIAALSAKKAASDSCKEPVANSREASPLPKEVNDSPKAADKSPESQNLIDGTKKASLKPSDSPRSVSSENSSKGSPSSPVGSTPAIPKVRIKTIKTSSGEIKRTVTRVLPEVDLDSGKKPSEQAASVMASVTSLLSSSASATVLSSPPRAPLQTAMVTSAVSSAELTPKQVTIKPVATAFLPVSAVKTAGSQVINLKLANNTTVKATVISAASVQSASSAIIKAANAIQQQTVVVPASSLANAKLVPKTVHLANLNLLPQGAQATSELRQVLTKPQQQIKQAIINAAASQPPKKVSRVQVVSSLQSSVVEAFNKVLSSVNPVPVYTPNLSPPANAGITLPMRGYKCLECGDAFALEKSLSQHYDRRSVRIEVTCNHCTKNLVFYNKCSLLSHARGHKEKGVVMQCSHLILKPVPADQMIVPPSSNTAASTLQSSVGAATHTVPKVQPGIAGAVISAPASTPMSPAMPLDEDPSKLCRHSLKCLECNEVFQDEPSLATHFQHAADTSGQQMKKHPCRQCDKSFSSSHSLCRHNRIKHKGIRKVYACSHCPDSRRTFTKRLMLERHIQLMHGIKDPDVKELSDDAGDVTNDEEEEAEIKEDAKVPSPKRKLEEPVLEFRPPRGAITQPLKKLKINVFKVHKCAVCGFTTENLLQFHEHIPQHRSDGSSHQCRECGLCYTSHGSLARHLFIVHKLKEPQPVSKQNGAGEDSQQENKPSPEDEAAEGAASDRKCKVCAKTFETEAALNTHMRTHGMAFIKSKRMSSAEK.

Disordered stretches follow at residues 26–92, 106–206, 220–265, and 281–362; these read PKAA…LHNG, GAKS…EAES, RKAE…PSSK, and AASD…KVRI. The segment covering 32-52 has biased composition (basic and acidic residues); the sequence is SGHDDHESHIKQNAHVDDDSH. Ser130, Ser133, and Ser134 each carry phosphoserine. Residues 136-151 are compositionally biased toward acidic residues; that stretch reads EEFEDDEKIEVDDPPD. The residue at position 175 (Lys175) is an N6-acetyllysine. Residues 182-193 are compositionally biased toward polar residues; sequence ENSSKTGVSTSG. Basic and acidic residues-rich tracts occupy residues 194–205 and 220–249; these read HTDKNKVKREAE and RKAE…EKSD. Residues 253–265 show a composition bias toward low complexity; the sequence is AAAASSKTKPSSK. The span at 302–314 shows a compositional bias: basic and acidic residues; that stretch reads EVNDSPKAADKSP. Phosphoserine occurs at positions 306 and 313. A compositionally biased stretch (low complexity) spans 336–353; sequence SVSSENSSKGSPSSPVGS. Ser433 bears the Phosphoserine mark. Glycyl lysine isopeptide (Lys-Gly) (interchain with G-Cter in SUMO2) cross-links involve residues Lys458 and Lys515. The C2H2-type 1; degenerate zinc finger occupies 615–634; the sequence is YKCLECGDAFALEKSLSQHY. The segment at 751 to 775 adopts a C2H2-type 2; degenerate zinc-finger fold; it reads LKCLECNEVFQDEPSLATHFQHAAD. The C2H2-type 3 zinc-finger motif lies at 784-807; the sequence is HPCRQCDKSFSSSHSLCRHNRIKH. A C2H2-type 4; degenerate zinc finger spans residues 814–840; sequence YACSHCPDSRRTFTKRLMLERHIQLMH. The interval 847 to 877 is disordered; it reads VKELSDDAGDVTNDEEEEAEIKEDAKVPSPK. Residues 852–867 are compositionally biased toward acidic residues; sequence DDAGDVTNDEEEEAEI. Basic and acidic residues predominate over residues 868-877; it reads KEDAKVPSPK. A Phosphoserine modification is found at Ser875. Residues Lys879 and Lys902 each participate in a glycyl lysine isopeptide (Lys-Gly) (interchain with G-Cter in SUMO2) cross-link. 2 C2H2-type zinc fingers span residues 938–961 and 999–1021; these read HQCR…FIVH and RKCK…MRTH. Residues 966 to 1000 are disordered; it reads PQPVSKQNGAGEDSQQENKPSPEDEAAEGAASDRK.

It belongs to the krueppel C2H2-type zinc-finger protein family.

Its subcellular location is the nucleus. Its function is as follows. May be involved in transcriptional regulation. This is Zinc finger protein 532 (Znf532) from Mus musculus (Mouse).